Consider the following 223-residue polypeptide: Octanoyltransferase (223 aa).

Residues 31–216 form the BPL/LPL catalytic domain; that stretch reads GQIGDTLLLL…QIGEVFALEP (186 aa). Residues 76–83, 145–147, and 159–161 contribute to the substrate site; these read RGGEVTYH, AIG, and GLA. The active-site Acyl-thioester intermediate is Cys177.

The protein belongs to the LipB family.

It is found in the cytoplasm. It catalyses the reaction octanoyl-[ACP] + L-lysyl-[protein] = N(6)-octanoyl-L-lysyl-[protein] + holo-[ACP] + H(+). It participates in protein modification; protein lipoylation via endogenous pathway; protein N(6)-(lipoyl)lysine from octanoyl-[acyl-carrier-protein]: step 1/2. Catalyzes the transfer of endogenously produced octanoic acid from octanoyl-acyl-carrier-protein onto the lipoyl domains of lipoate-dependent enzymes. Lipoyl-ACP can also act as a substrate although octanoyl-ACP is likely to be the physiological substrate. The polypeptide is Octanoyltransferase (Chloroflexus aurantiacus (strain ATCC 29366 / DSM 635 / J-10-fl)).